Here is a 726-residue protein sequence, read N- to C-terminus: Pyrroloquinoline quinone-dependent pyranose dehydrogenase (726 aa).

The signal sequence occupies residues 1–18 (MRSSSLAWALGLVALANA). Residues Met83 and Tyr108 each coordinate heme b. Residues Cys138 and Cys141 are joined by a disulfide bond. N-linked (GlcNAc...) asparagine glycosylation is present at Asn140. Arg181 and His182 together coordinate heme b. The disordered stretch occupies residues 211-242 (PPLSGGAPTQPPTQQPPTTTAPPPPPPSSTFV). Residues 219 to 238 (TQPPTQQPPTTTAPPPPPPS) are compositionally biased toward pro residues. Cys244 and Cys302 are disulfide-bonded. 4 residues coordinate pyrroloquinoline quinone: Arg273, His363, Arg430, and Asn431. Residues Ser449 and Asp451 each coordinate Ca(2+). The cysteines at positions 492 and 525 are disulfide-linked. Residue His539 participates in pyrroloquinoline quinone binding. Residue Asn551 is glycosylated (N-linked (GlcNAc...) asparagine). His560, Trp563, and Asn564 together coordinate pyrroloquinoline quinone. Cys611 and Cys619 are disulfide-bonded. Residue Arg621 participates in pyrroloquinoline quinone binding. A compositionally biased stretch (pro residues) spans 659-678 (ITQPPITTSPPTPTTPPVVQ). A disordered region spans residues 659-689 (ITQPPITTSPPTPTTPPVVQPPTTVAPPQAS). Residues 679–689 (PPTTVAPPQAS) show a composition bias toward low complexity. The 37-residue stretch at 688–724 (ASQTLWGQCGGQGWTGPTLCPANSVCRESNQWYSQCV) folds into the CBM1 domain.

The protein belongs to the sugar dehydrogenase AA12 family. It depends on Ca(2+) as a cofactor. The cofactor is pyrroloquinoline quinone. Requires heme b as cofactor.

It is found in the secreted. In terms of biological role, pyrroloquinoline quinone (PPQ)-dependent oxidoreductase that catalyzes the oxidation of various sugars including L-galactose, L-gulose, D-talose, D-arabinose, D-lyxose, L-fucose and D-glucosone. Shows significant activity toward the reverse-chair conformation of pyranoses. Shows little or no activity toward abundant sugars such as D-glucose, D-fructose, cellobiose, as well L-xylose and L-glucose. This enzyme is able to direct electrical communication with electrodes, without artificial electron mediators, thus allowing direct electron transfer (DET)-type bioelectrocatalysis. Exhibits binding affinity for insoluble cellulose. PDH does not oxidize cello-oligosaccharides but is able to activate the C-1-oxidizing Neurospora crassa LPMO9F and the C-4-oxidizing Neurospora crassa LPMO9C thanks to the electron-tranfer activity of the cytochrome domain and the localization of PDH in the vicinity of the LPMO substrates by the CBM1 domain. This chain is Pyrroloquinoline quinone-dependent pyranose dehydrogenase, found in Coprinopsis cinerea (strain Okayama-7 / 130 / ATCC MYA-4618 / FGSC 9003) (Inky cap fungus).